We begin with the raw amino-acid sequence, 437 residues long: Epsilon-sarcoglycan (437 aa).

Residues Met1–Phe317 lie on the Extracellular side of the membrane. Asn200 carries N-linked (GlcNAc...) asparagine glycosylation. A helical membrane pass occupies residues Leu318–Ile338. The Cytoplasmic portion of the chain corresponds to Met339–Pro437.

The protein belongs to the sarcoglycan alpha/epsilon family. N-glycosylated. Post-translationally, ubiquitinated, leading to its degradation by the proteasome. In terms of tissue distribution, ubiquitous.

Its subcellular location is the cell membrane. The protein resides in the sarcolemma. It is found in the cytoplasm. The protein localises to the cytoskeleton. It localises to the cell projection. Its subcellular location is the dendrite. The protein resides in the golgi apparatus. In terms of biological role, component of the sarcoglycan complex, a subcomplex of the dystrophin-glycoprotein complex which forms a link between the F-actin cytoskeleton and the extracellular matrix. This Homo sapiens (Human) protein is Epsilon-sarcoglycan (SGCE).